Reading from the N-terminus, the 102-residue chain is Small ribosomal subunit protein uS10 (102 aa).

It belongs to the universal ribosomal protein uS10 family. In terms of assembly, part of the 30S ribosomal subunit.

Its function is as follows. Involved in the binding of tRNA to the ribosomes. The chain is Small ribosomal subunit protein uS10 from Methanospirillum hungatei JF-1 (strain ATCC 27890 / DSM 864 / NBRC 100397 / JF-1).